The chain runs to 1885 residues: Chitin synthase 5 (1885 aa).

A Myosin motor domain is found at 1-789; the sequence is MATRGNVPAH…SIALTGSQAA (789 aa). 99-106 contributes to the ATP binding site; sequence GESGSGKT. 2 N-linked (GlcNAc...) asparagine glycosylation sites follow: asparagine 219 and asparagine 429. Positions 601–649 are disordered; sequence KPLRMPSVSRKKHDQLRRMASRRADRSPAPQEEEPLPGTEEAKVRRTKP. Residues 609–621 show a composition bias toward basic residues; it reads SRKKHDQLRRMAS. Positions 666–690 are actin-binding; sequence LDNITKSLTAPNVNNYFVFCLKPND. Asparagine 668 carries N-linked (GlcNAc...) asparagine glycosylation. Residues 794–817 are disordered; it reads GDIGSPSRPDTPGHNPFSDSKARL. A run of 2 helical transmembrane segments spans residues 894–914 and 929–949; these read WLAIVYFLTWYLPDFAIKWIG and FAINLLIWLSCGLVVFFIIVF. One can recognise a Cytochrome b5 heme-binding domain in the interval 957–1016; it reads QNVYSAAELSAHDGKGKHSAYVAIRGQVFDLGAFMPNHYPKIIPQSSLKKYAGVDATGLF. Asparagine 1043 and asparagine 1068 each carry an N-linked (GlcNAc...) asparagine glycan. Residues 1205 to 1225 form a helical membrane-spanning segment; sequence ILLAVSILLCSVIGFKFFAAL. N-linked (GlcNAc...) asparagine glycosylation is found at asparagine 1462 and asparagine 1568. 3 consecutive transmembrane segments (helical) span residues 1599-1619, 1626-1646, and 1653-1673; these read LLSTVVAPVTVAYIAYLIVLL, VPLTAFILLGAIYGLQAIIFI, and MIGWMIVYILAMPVFSLGLPL. 2 N-linked (GlcNAc...) asparagine glycosylation sites follow: asparagine 1759 and asparagine 1790. Residues 1827-1882 form the DEK-C domain; it reads LPTDDMLLNEIRDILRTADLMTVTKKGIKQELERRFNVNLDMKRAYIGSATEAILS.

This sequence in the N-terminal section; belongs to the TRAFAC class myosin-kinesin ATPase superfamily. Myosin family. The protein in the C-terminal section; belongs to the chitin synthase family. Class V subfamily. Maximal activity requires trypsin activation, suggesting a zymogenic nature.

The protein resides in the cell membrane. Its subcellular location is the membrane. It catalyses the reaction [(1-&gt;4)-N-acetyl-beta-D-glucosaminyl](n) + UDP-N-acetyl-alpha-D-glucosamine = [(1-&gt;4)-N-acetyl-beta-D-glucosaminyl](n+1) + UDP + H(+). Polymerizes chitin, a structural polymer of the cell wall and septum, by transferring the sugar moiety of UDP-GlcNAc to the non-reducing end of the growing chitin polymer. CHS5 is required for the sustained growth at 37 degrees Celsius and is of critical importance for virulence. Especially important at infection temperatures for maintaining the cell wall integrity of developing yeast buds, elongating tips of hyphae, and random sites of expansion in sclerotic forms. The polypeptide is Chitin synthase 5 (Exophiala dermatitidis (strain ATCC 34100 / CBS 525.76 / NIH/UT8656) (Black yeast)).